Here is a 521-residue protein sequence, read N- to C-terminus: BAR/IMD domain-containing adapter protein 2 (521 aa).

The IMD domain occupies 1–250 (MSLSRSEEMH…VQLMQQMGNS (250 aa)). The stretch at 132-153 (DALDKCQAELKKLRKKSQGSKN) forms a coiled coil. A phosphoserine mark is found at Ser262, Ser324, Ser326, and Ser337. Residues 297-370 (APVMNGVSGP…TLPRSSSMAA (74 aa)) form a disordered region. Positions 321-333 (QPKSTSPPQSQSK) are enriched in low complexity. The residue at position 341 (Thr341) is a Phosphothreonine. Residue Ser347 is modified to Phosphoserine. Positions 353 to 368 (SYATTENKTLPRSSSM) are enriched in polar residues. A Phosphothreonine modification is found at Thr361. Residues Ser367, Ser385, Ser396, and Ser455 each carry the phosphoserine modification. Residues 375–438 (NGRMRVKAIF…PFSYTRVLDN (64 aa)) enclose the SH3 domain. The segment at 450-471 (QGKSSSTGNLLDKEDLALPPPD) is disordered.

Homodimer. Interacts with CDC42 and RAC1 that have been activated by GTP binding. Interacts with ATN1, ADGRB1, DIAPH1, EPS8, SHANK1, SHANK2, SHANK3, TIAM1, WASF1 and WASF2. Interacts with ENAH after recruitment of CDC42. Phosphorylated on tyrosine residues by INSR in response to insulin treatment.

It localises to the cytoplasm. The protein localises to the membrane. The protein resides in the cell projection. It is found in the filopodium. Its subcellular location is the ruffle. It localises to the cytoskeleton. Adapter protein that links membrane-bound small G-proteins to cytoplasmic effector proteins. Necessary for CDC42-mediated reorganization of the actin cytoskeleton and for RAC1-mediated membrane ruffling. Involved in the regulation of the actin cytoskeleton by WASF family members and the Arp2/3 complex. Plays a role in neurite growth. Acts syngeristically with ENAH to promote filipodia formation. Plays a role in the reorganization of the actin cytoskeleton in response to bacterial infection. Participates in actin bundling when associated with EPS8, promoting filopodial protrusions. The chain is BAR/IMD domain-containing adapter protein 2 (BAIAP2) from Bos taurus (Bovine).